The following is a 296-amino-acid chain: Probable endonuclease 4 (296 aa).

Residues His69, His109, Glu160, Asp194, His197, His231, Asp244, His246, and Glu276 each coordinate Zn(2+).

The protein belongs to the AP endonuclease 2 family. The cofactor is Zn(2+).

It carries out the reaction Endonucleolytic cleavage to 5'-phosphooligonucleotide end-products.. Endonuclease IV plays a role in DNA repair. It cleaves phosphodiester bonds at apurinic or apyrimidinic (AP) sites, generating a 3'-hydroxyl group and a 5'-terminal sugar phosphate. This chain is Probable endonuclease 4, found in Sulfurovum sp. (strain NBC37-1).